A 169-amino-acid polypeptide reads, in one-letter code: Phosphopantetheine adenylyltransferase (169 aa).

Residue Ser-10 coordinates substrate. ATP contacts are provided by residues 10–11 (SF) and His-18. Substrate contacts are provided by Lys-42, Thr-79, and Arg-93. Residues 94–96 (GLR), Glu-104, and 129–135 (VRPITAT) each bind ATP.

This sequence belongs to the bacterial CoaD family. In terms of assembly, homohexamer. It depends on Mg(2+) as a cofactor.

It localises to the cytoplasm. The enzyme catalyses (R)-4'-phosphopantetheine + ATP + H(+) = 3'-dephospho-CoA + diphosphate. It participates in cofactor biosynthesis; coenzyme A biosynthesis; CoA from (R)-pantothenate: step 4/5. Reversibly transfers an adenylyl group from ATP to 4'-phosphopantetheine, yielding dephospho-CoA (dPCoA) and pyrophosphate. This chain is Phosphopantetheine adenylyltransferase, found in Rhodopseudomonas palustris (strain TIE-1).